The sequence spans 510 residues: Ribonuclease Y (510 aa).

Residues 4–24 form a helical membrane-spanning segment; that stretch reads LLWAVVALLAGLAGGAGIGVY. Residues 200 to 260 form the KH domain; it reads TVSTVNLPSE…VRREVARVAL (61 aa). The region spanning 326–419 is the HD domain; the sequence is VLQHSLECAL…VIAADAISGA (94 aa).

Belongs to the RNase Y family.

It localises to the cell membrane. Its function is as follows. Endoribonuclease that initiates mRNA decay. The polypeptide is Ribonuclease Y (Chloroflexus aurantiacus (strain ATCC 29366 / DSM 635 / J-10-fl)).